We begin with the raw amino-acid sequence, 427 residues long: Glutamyl-tRNA reductase (427 aa).

Substrate contacts are provided by residues 49–52 (TCNR), Ser-101, 106–108 (EPQ), and Gln-112. Cys-50 (nucleophile) is an active-site residue. 181 to 186 (GAGETI) contributes to the NADP(+) binding site. The tract at residues 407 to 427 (FPATPGYRHPPVRPDDADPAP) is disordered. Residues 418-427 (VRPDDADPAP) show a composition bias toward basic and acidic residues.

It belongs to the glutamyl-tRNA reductase family. Homodimer.

It carries out the reaction (S)-4-amino-5-oxopentanoate + tRNA(Glu) + NADP(+) = L-glutamyl-tRNA(Glu) + NADPH + H(+). The protein operates within porphyrin-containing compound metabolism; protoporphyrin-IX biosynthesis; 5-aminolevulinate from L-glutamyl-tRNA(Glu): step 1/2. Catalyzes the NADPH-dependent reduction of glutamyl-tRNA(Glu) to glutamate 1-semialdehyde (GSA). This chain is Glutamyl-tRNA reductase, found in Stenotrophomonas maltophilia (strain R551-3).